A 377-amino-acid chain; its full sequence is Nitric oxide reductase FlRd-NAD(+) reductase (377 aa).

The protein belongs to the FAD-dependent oxidoreductase family. It depends on FAD as a cofactor.

It localises to the cytoplasm. It carries out the reaction 2 reduced [nitric oxide reductase rubredoxin domain] + NAD(+) + H(+) = 2 oxidized [nitric oxide reductase rubredoxin domain] + NADH. The protein operates within nitrogen metabolism; nitric oxide reduction. Its function is as follows. One of at least two accessory proteins for anaerobic nitric oxide (NO) reductase. Reduces the rubredoxin moiety of NO reductase. The chain is Nitric oxide reductase FlRd-NAD(+) reductase from Citrobacter koseri (strain ATCC BAA-895 / CDC 4225-83 / SGSC4696).